Reading from the N-terminus, the 904-residue chain is DNA polymerase I (904 aa).

Residues 186-279 (TPRQYPDFAA…DTLRLQPWDR (94 aa)) form the 5'-3' exonuclease domain. One can recognise a 3'-5' exonuclease domain in the interval 317-493 (RGGALAPGTV…LADALDAELA (177 aa)).

This sequence belongs to the DNA polymerase type-A family. Single-chain monomer with multiple functions.

The catalysed reaction is DNA(n) + a 2'-deoxyribonucleoside 5'-triphosphate = DNA(n+1) + diphosphate. Functionally, in addition to polymerase activity, this DNA polymerase exhibits 3'-5' and 5'-3' exonuclease activity. This chain is DNA polymerase I (polA), found in Mycobacterium bovis (strain ATCC BAA-935 / AF2122/97).